The following is a 535-amino-acid chain: Ankyrin repeat domain-containing protein 34C (535 aa).

ANK repeat units lie at residues 10 to 39 (TDGNSLLKAVWLGRLRLTRLLLEGGAYINE), 43 to 80 (KGETALMVACITKHVDQQSISKSKMVKYLLDNRADPNI), 84 to 114 (SGKTALIHACIRRAGGEVVSLLLENGADPSL), and 118 to 147 (TGASALVYAINADDKDALKHLLDACKAKGK). 2 disordered regions span residues 159–181 (SGTKTTKQYLNVPPSPKVEDRHS) and 214–237 (AGHPSSCNTSKAVNEPGSPTRKVS). Positions 216-225 (HPSSCNTSKA) are enriched in polar residues. Position 301 is a phosphoserine (serine 301). The segment at 381 to 444 (DLDIQPGPDP…RRRPPHLLER (64 aa)) is disordered. Serine 447 is modified (phosphoserine).

The protein belongs to the ANKRD34 family.

In Homo sapiens (Human), this protein is Ankyrin repeat domain-containing protein 34C (ANKRD34C).